A 346-amino-acid polypeptide reads, in one-letter code: D-alanine--D-alanine ligase A (346 aa).

Residues 138–332 enclose the ATP-grasp domain; the sequence is KRLFLAAGVE…FAELCERICR (195 aa). Position 164-217 (164-217) interacts with ATP; sequence QLGFPLVVKPNSQGSTVGLSIVHSQAELQPAIELAGRYGDEVMLERFVAGREVT. 3 residues coordinate Mg(2+): aspartate 286, glutamate 299, and asparagine 301.

The protein belongs to the D-alanine--D-alanine ligase family. Mg(2+) serves as cofactor. The cofactor is Mn(2+).

The protein localises to the cytoplasm. It catalyses the reaction 2 D-alanine + ATP = D-alanyl-D-alanine + ADP + phosphate + H(+). Its pathway is cell wall biogenesis; peptidoglycan biosynthesis. Cell wall formation. This is D-alanine--D-alanine ligase A from Pseudomonas aeruginosa (strain ATCC 15692 / DSM 22644 / CIP 104116 / JCM 14847 / LMG 12228 / 1C / PRS 101 / PAO1).